The sequence spans 477 residues: Bifunctional protein HldE (477 aa).

A ribokinase region spans residues 1–318 (MKVTLPEFER…ENAVRGRADT (318 aa)). Residue 195–198 (NLSE) participates in ATP binding. Asp264 is a catalytic residue. Residues 344–477 (MTNGVFDILH…IKKIQKDSDK (134 aa)) are cytidylyltransferase.

In the N-terminal section; belongs to the carbohydrate kinase PfkB family. The protein in the C-terminal section; belongs to the cytidylyltransferase family. In terms of assembly, homodimer.

The enzyme catalyses D-glycero-beta-D-manno-heptose 7-phosphate + ATP = D-glycero-beta-D-manno-heptose 1,7-bisphosphate + ADP + H(+). It carries out the reaction D-glycero-beta-D-manno-heptose 1-phosphate + ATP + H(+) = ADP-D-glycero-beta-D-manno-heptose + diphosphate. The protein operates within nucleotide-sugar biosynthesis; ADP-L-glycero-beta-D-manno-heptose biosynthesis; ADP-L-glycero-beta-D-manno-heptose from D-glycero-beta-D-manno-heptose 7-phosphate: step 1/4. Its pathway is nucleotide-sugar biosynthesis; ADP-L-glycero-beta-D-manno-heptose biosynthesis; ADP-L-glycero-beta-D-manno-heptose from D-glycero-beta-D-manno-heptose 7-phosphate: step 3/4. Its function is as follows. Catalyzes the phosphorylation of D-glycero-D-manno-heptose 7-phosphate at the C-1 position to selectively form D-glycero-beta-D-manno-heptose-1,7-bisphosphate. Functionally, catalyzes the ADP transfer from ATP to D-glycero-beta-D-manno-heptose 1-phosphate, yielding ADP-D-glycero-beta-D-manno-heptose. The protein is Bifunctional protein HldE of Citrobacter koseri (strain ATCC BAA-895 / CDC 4225-83 / SGSC4696).